The sequence spans 765 residues: FHF complex subunit HOOK interacting protein 2A (765 aa).

Composition is skewed to polar residues over residues 200–209 and 538–550; these read LSTDTGQSCQ and NTLS…SSSP. Disordered regions lie at residues 200–234 and 538–562; these read LSTD…QMGD and NTLS…TDGK.

The protein belongs to the FHIP family.

May be required for proper functioning of the nervous system. This is FHF complex subunit HOOK interacting protein 2A (FHIP2A) from Bos taurus (Bovine).